Reading from the N-terminus, the 253-residue chain is Glucosamine-6-phosphate deaminase (253 aa).

Asp-67 serves as the catalytic Proton acceptor; for enolization step. Asn-136 functions as the For ring-opening step in the catalytic mechanism. His-138 acts as the Proton acceptor; for ring-opening step in catalysis. Catalysis depends on Glu-143, which acts as the For ring-opening step.

This sequence belongs to the glucosamine/galactosamine-6-phosphate isomerase family. NagB subfamily.

The enzyme catalyses alpha-D-glucosamine 6-phosphate + H2O = beta-D-fructose 6-phosphate + NH4(+). It participates in amino-sugar metabolism; N-acetylneuraminate degradation; D-fructose 6-phosphate from N-acetylneuraminate: step 5/5. Catalyzes the reversible isomerization-deamination of glucosamine 6-phosphate (GlcN6P) to form fructose 6-phosphate (Fru6P) and ammonium ion. The chain is Glucosamine-6-phosphate deaminase from Thermoanaerobacter pseudethanolicus (strain ATCC 33223 / 39E) (Clostridium thermohydrosulfuricum).